We begin with the raw amino-acid sequence, 179 residues long: Large ribosomal subunit protein uL5 (179 aa).

Belongs to the universal ribosomal protein uL5 family. Part of the 50S ribosomal subunit; part of the 5S rRNA/L5/L18/L25 subcomplex. Contacts the 5S rRNA and the P site tRNA. Forms a bridge to the 30S subunit in the 70S ribosome.

In terms of biological role, this is one of the proteins that bind and probably mediate the attachment of the 5S RNA into the large ribosomal subunit, where it forms part of the central protuberance. In the 70S ribosome it contacts protein S13 of the 30S subunit (bridge B1b), connecting the 2 subunits; this bridge is implicated in subunit movement. Contacts the P site tRNA; the 5S rRNA and some of its associated proteins might help stabilize positioning of ribosome-bound tRNAs. In Staphylococcus epidermidis (strain ATCC 35984 / DSM 28319 / BCRC 17069 / CCUG 31568 / BM 3577 / RP62A), this protein is Large ribosomal subunit protein uL5.